Here is a 525-residue protein sequence, read N- to C-terminus: Ribosomal protein S6 kinase beta-1 (525 aa).

Positions 1-54 (MRRRRRRDGFYPAPDFRDREAEDMAGVFDIDLDQPEDAGSEDELEEGGQLNESM) are disordered. The TOS motif signature appears at 28–32 (FDIDL). Over residues 30–46 (IDLDQPEDAGSEDELEE) the composition is skewed to acidic residues. Positions 91–352 (FELLRVLGKG…AGEVQAHPFF (262 aa)) constitute a Protein kinase domain. ATP is bound by residues 97 to 105 (LGKGGYGKV) and Lys-123. Asp-218 (proton acceptor) is an active-site residue. Position 252 is a phosphothreonine; by PDPK1 (Thr-252). Positions 353–423 (RHINWEELLA…VAPSVLESVK (71 aa)) constitute an AGC-kinase C-terminal domain. The segment at 380-399 (SQFDSKFTRQTPVDSPDDST) is disordered. Positions 381–399 (QFDSKFTRQTPVDSPDDST) are enriched in polar residues. The residue at position 394 (Ser-394) is a Phosphoserine. A Phosphothreonine; by MTOR, NEK6 and NEK7 modification is found at Thr-412. An autoinhibitory domain region spans residues 424–525 (EKFSFEPKIR…KRPEHLRMNL (102 aa)). 2 positions are modified to phosphoserine: Ser-434 and Ser-441. Thr-444 carries the phosphothreonine modification. A phosphoserine mark is found at Ser-447 and Ser-452. The residue at position 516 (Lys-516) is an N6-acetyllysine.

Belongs to the protein kinase superfamily. AGC Ser/Thr protein kinase family. S6 kinase subfamily. In terms of assembly, interacts with PPP1R9A/neurabin-1. Interacts with RPTOR. Interacts with IRS1. Interacts with EIF3B and EIF3C. Interacts with TRAF4. Interacts with POLDIP3. Interacts (via N-terminus) with IER5. As to quaternary structure, (Microbial infection) Interacts with Mumps virus phosphoprotein; this interaction may play a role in the viral replication and transcription. Phosphorylation at Thr-412 is regulated by mTORC1. The phosphorylation at this site is maintained by an agonist-dependent autophosphorylation mechanism. Activated by phosphorylation at Thr-252 by PDPK1. Dephosphorylation by PPP1CC at Thr-412 in mitochondrion. In terms of tissue distribution, widely expressed.

It localises to the synapse. The protein resides in the synaptosome. The protein localises to the mitochondrion outer membrane. It is found in the mitochondrion. Its subcellular location is the nucleus. It localises to the cytoplasm. It catalyses the reaction L-seryl-[protein] + ATP = O-phospho-L-seryl-[protein] + ADP + H(+). It carries out the reaction L-threonyl-[protein] + ATP = O-phospho-L-threonyl-[protein] + ADP + H(+). With respect to regulation, activation requires multiple phosphorylation events on serine/threonine residues. Activation appears to be first mediated by phosphorylation of multiple sites in the autoinhibitory domain, which facilitates phosphorylation at Thr-412, disrupting the autoinhibitory mechanism and allowing phosphorylation of Thr-252 by PDPK1. The active conformation of the kinase is believed to be stabilized by a mechanism involving three conserved phosphorylation sites located in the kinase domain activation loop (Thr-252) and in the AGC-kinase C-terminal domain (Ser-394 in the middle of the tail/linker region and Thr-412 within a hydrophobic motif at its end). Activated by mTORC1; isoform Alpha I and isoform Alpha II are sensitive to rapamycin, which inhibits activating phosphorylation at Thr-412. Activated by PDPK1. Serine/threonine-protein kinase that acts downstream of mTOR signaling in response to growth factors and nutrients to promote cell proliferation, cell growth and cell cycle progression. Regulates protein synthesis through phosphorylation of EIF4B, RPS6 and EEF2K, and contributes to cell survival by repressing the pro-apoptotic function of BAD. Under conditions of nutrient depletion, the inactive form associates with the EIF3 translation initiation complex. Upon mitogenic stimulation, phosphorylation by the mechanistic target of rapamycin complex 1 (mTORC1) leads to dissociation from the EIF3 complex and activation. The active form then phosphorylates and activates several substrates in the pre-initiation complex, including the EIF2B complex and the cap-binding complex component EIF4B. Also controls translation initiation by phosphorylating a negative regulator of EIF4A, PDCD4, targeting it for ubiquitination and subsequent proteolysis. Promotes initiation of the pioneer round of protein synthesis by phosphorylating POLDIP3/SKAR. In response to IGF1, activates translation elongation by phosphorylating EEF2 kinase (EEF2K), which leads to its inhibition and thus activation of EEF2. Also plays a role in feedback regulation of mTORC2 by mTORC1 by phosphorylating MAPKAP1/SIN1, MTOR and RICTOR, resulting in the inhibition of mTORC2 and AKT1 signaling. Also involved in feedback regulation of mTORC1 and mTORC2 by phosphorylating DEPTOR. Mediates cell survival by phosphorylating the pro-apoptotic protein BAD and suppressing its pro-apoptotic function. Phosphorylates mitochondrial URI1 leading to dissociation of a URI1-PPP1CC complex. The free mitochondrial PPP1CC can then dephosphorylate RPS6KB1 at Thr-412, which is proposed to be a negative feedback mechanism for the RPS6KB1 anti-apoptotic function. Mediates TNF-alpha-induced insulin resistance by phosphorylating IRS1 at multiple serine residues, resulting in accelerated degradation of IRS1. In cells lacking functional TSC1-2 complex, constitutively phosphorylates and inhibits GSK3B. May be involved in cytoskeletal rearrangement through binding to neurabin. Phosphorylates and activates the pyrimidine biosynthesis enzyme CAD, downstream of MTOR. Following activation by mTORC1, phosphorylates EPRS and thereby plays a key role in fatty acid uptake by adipocytes and also most probably in interferon-gamma-induced translation inhibition. In Homo sapiens (Human), this protein is Ribosomal protein S6 kinase beta-1 (RPS6KB1).